Consider the following 191-residue polypeptide: Calcium-activated potassium channel subunit beta-1 (191 aa).

Residues 1–18 are Cytoplasmic-facing; that stretch reads MGKKLVMAQKRGETRALC. A helical membrane pass occupies residues 19-39; it reads LGVAMVVCAAITYYILGTTVL. Over 40-155 the chain is Extracellular; it reads PLYQKSVWTQ…VVYQRLYGPQ (116 aa). 2 N-linked (GlcNAc...) asparagine glycosylation sites follow: Asn-80 and Asn-142. The chain crosses the membrane as a helical span at residues 156–176; it reads ILLFSFFWPTFLLTGGLLIIA. The Cytoplasmic segment spans residues 177–191; sequence MVKLNRSLSVLAAQK.

The protein belongs to the KCNMB (TC 8.A.14.1) family. KCNMB1 subfamily. In terms of assembly, interacts with KCNMA1 tetramer. There are probably 4 molecules of KCMNB1 per KCNMA1 tetramer. N-glycosylated. Weakly expressed. In brain, it is expressed in a few discrete populations of neurons that also express KCNMA1.

It is found in the membrane. In terms of biological role, regulatory subunit of the calcium activated potassium KCNMA1 (maxiK) channel. Modulates the calcium sensitivity and gating kinetics of KCNMA1, thereby contributing to KCNMA1 channel diversity. Increases the apparent Ca(2+)/voltage sensitivity of the KCNMA1 channel. It also modifies KCNMA1 channel kinetics and alters its pharmacological properties. It slows down the activation and the deactivation kinetics of the channel. Acts as a negative regulator of smooth muscle contraction by enhancing the calcium sensitivity to KCNMA1. Its presence is also a requirement for internal binding of the KCNMA1 channel opener dehydrosoyasaponin I (DHS-1) triterpene glycoside and for external binding of the agonist hormone 17-beta-estradiol (E2). Increases the binding activity of charybdotoxin (CTX) toxin to KCNMA1 peptide blocker by increasing the CTX association rate and decreasing the dissociation rate. This Rattus norvegicus (Rat) protein is Calcium-activated potassium channel subunit beta-1 (Kcnmb1).